The following is a 168-amino-acid chain: Cytochrome c oxidase subunit 2 (168 aa).

At 1–3 (MVD) the chain is on the cytoplasmic side. Residues 4 to 38 (EHKAHKAILAYEKGWLAFSLAMLFVFIALIAYTLA) traverse the membrane as a helical segment. The Periplasmic segment spans residues 39–168 (THTAGVIPAG…NMFGTIVVKE (130 aa)). Positions 114, 149, 153, and 157 each coordinate Cu cation.

The protein belongs to the cytochrome c oxidase subunit 2 family.

Its subcellular location is the cell membrane. The catalysed reaction is 4 Fe(II)-[cytochrome c] + O2 + 8 H(+)(in) = 4 Fe(III)-[cytochrome c] + 2 H2O + 4 H(+)(out). Functionally, subunits I and II form the functional core of the enzyme complex. Electrons originating in cytochrome c are transferred via heme a and Cu(A) to the binuclear center formed by heme a3 and Cu(B). The chain is Cytochrome c oxidase subunit 2 (cbaB) from Thermus thermophilus (strain ATCC 27634 / DSM 579 / HB8).